A 217-amino-acid polypeptide reads, in one-letter code: Vesicle-associated membrane protein 723 (217 aa).

Topologically, residues 1-192 (MAQQSLFYSF…KWFQNMKIKL (192 aa)) are cytoplasmic. A Longin domain is found at 10 to 114 (FIARGTVILV…SLNKEFGSNL (105 aa)). The 57-residue stretch at 130–186 (NLAKAKAQVSEVKSLMMENIEKVLARGVICEMLGSSESQPQAFYIKRTQMKRKKWFQ) folds into the v-SNARE coiled-coil homology domain. Residues 193-213 (IVLAIIIALILIIILSVCGGF) form a helical; Anchor for type IV membrane protein membrane-spanning segment. Topologically, residues 214–217 (NCGK) are vesicular.

The protein belongs to the synaptobrevin family. In terms of tissue distribution, highly expressed in stems and roots. Detected in flowers and leaves.

It localises to the endoplasmic reticulum membrane. Its function is as follows. Involved in the targeting and/or fusion of transport vesicles to their target membrane. This chain is Vesicle-associated membrane protein 723, found in Arabidopsis thaliana (Mouse-ear cress).